The chain runs to 214 residues: Protein OPG176 (214 aa).

The protein belongs to the orthopoxvirus OPG176 family. Tetramer. Interacts with host MYD88, TRF4, TICAM2 and MAL.

In terms of biological role, BCL2-like protein which disrupts the host immune response by inhibiting the TLR4 signaling pathway leading to NF-kappa-B activation. Acts close to the plasma membrane and targets several host TIR-domain containing adapter proteins including MYD88, TIRAP, TRIF and TICAM2. In turn, blocks the host NF-kappa-B and TRIF-mediated IRF3 activation. This Homo sapiens (Human) protein is Protein OPG176 (OPG176).